Reading from the N-terminus, the 414-residue chain is Serine/threonine transporter SstT (414 aa).

Residues 2-15 (TTQRSPGLFRRLAH) are Cytoplasmic-facing. The chain crosses the membrane as a helical span at residues 16–36 (GSLVKQILVGLVLGILLAWIS). Residues 37-45 (KPAAEAVGL) lie on the Periplasmic side of the membrane. The chain crosses the membrane as a helical span at residues 46-66 (LGTLFVGALKAVAPILVLMLV). Over 67 to 83 (MASIANHQHGQKTNIRP) the chain is Cytoplasmic. Residues 84–104 (ILFLYLLGTFSAALAAVVFSF) form a helical membrane-spanning segment. The Periplasmic portion of the chain corresponds to 105-142 (AFPSTLHLSSSAGDISPPSGIVEVMRGLVMSMVSNPID). A helical transmembrane segment spans residues 143-163 (ALLKGNYIGILVWAIGLGFAL). Topologically, residues 164–179 (RHGNETTKNLVNDLSN) are cytoplasmic. Residues 180 to 200 (AVTFMVKLVIRFAPIGIFGLV) form a helical membrane-spanning segment. At 201-217 (SSTLATTGFSTLWGYAQ) the chain is on the periplasmic side. A helical transmembrane segment spans residues 218 to 238 (LLVVLVGCMLLVALVVNPLLV). Topologically, residues 239–299 (WWKIRRNPFP…VSIPLGATIN (61 aa)) are cytoplasmic. The chain crosses the membrane as a helical span at residues 300–320 (MAGAAITITVLTLAAVNTLGI). The Periplasmic portion of the chain corresponds to 321–331 (PVDLPTALLLS). Residues 332 to 352 (VVASLCACGASGVAGGSLLLI) traverse the membrane as a helical segment. Over 353-414 (PLACNMFGIS…DRLANSALRN (62 aa)) the chain is Cytoplasmic.

This sequence belongs to the dicarboxylate/amino acid:cation symporter (DAACS) (TC 2.A.23) family.

It localises to the cell inner membrane. The enzyme catalyses L-serine(in) + Na(+)(in) = L-serine(out) + Na(+)(out). The catalysed reaction is L-threonine(in) + Na(+)(in) = L-threonine(out) + Na(+)(out). In terms of biological role, involved in the import of serine and threonine into the cell, with the concomitant import of sodium (symport system). This chain is Serine/threonine transporter SstT, found in Shigella boydii serotype 4 (strain Sb227).